Here is a 459-residue protein sequence, read N- to C-terminus: Palmitoyltransferase PFA4 (459 aa).

At 1–9 (MAARNWSRV) the chain is on the cytoplasmic side. The helical transmembrane segment at 10-30 (WVGGTVILISFIAFSSQIFVI) threads the bilayer. Over 31 to 37 (WPWYGRE) the chain is Lumenal. The chain crosses the membrane as a helical span at residues 38 to 58 (ISLDLLKLLVPLNLAAFMIFW). Residues 59 to 138 (NYRLCVITSP…GNCVGFYNQG (80 aa)) lie on the Cytoplasmic side of the membrane. The region spanning 95-145 (RYCKNCEHYKPPRAHHCRQCKTCWLKLDHHCPWIGNCVGFYNQGHFIRFLL) is the DHHC domain. Catalysis depends on C125, which acts as the S-palmitoyl cysteine intermediate. The chain crosses the membrane as a helical span at residues 139 to 159 (HFIRFLLWVDIGTTFHLIIMV). The Lumenal segment spans residues 160–177 (RRVLYIAEYYHQEPTLAD). A helical transmembrane segment spans residues 178-198 (VLFLVFNFATCVPVWLCVGMF). Residues 199–459 (SIYHVYLACG…DTEEESGYAH (261 aa)) are Cytoplasmic-facing. The tract at residues 278 to 379 (HTTQYFWPPQ…DYDHYDEGPM (102 aa)) is disordered. The span at 286 to 299 (PQDPSRLPNPPPIP) shows a compositional bias: pro residues. Residues 310–322 (NGFNPNLQPTNSL) show a composition bias toward polar residues. A compositionally biased stretch (basic and acidic residues) spans 331 to 356 (HIDEDEHSHERDQYRHYSSGEERDND).

Belongs to the DHHC palmitoyltransferase family. PFA4 subfamily.

It localises to the endoplasmic reticulum membrane. It catalyses the reaction L-cysteinyl-[protein] + hexadecanoyl-CoA = S-hexadecanoyl-L-cysteinyl-[protein] + CoA. In terms of biological role, mediates the reversible addition of palmitate to target proteins, thereby regulating their membrane association and biological function. The polypeptide is Palmitoyltransferase PFA4 (Cryptococcus neoformans var. neoformans serotype D (strain B-3501A) (Filobasidiella neoformans)).